The sequence spans 210 residues: MSKFIVIEGLEGAGKSTAIKNVLATLAKHGITAPVTTREPGGTPLAEKMRELVKQGHPDEPLTDMAELLLLYAARAQLVGNVIKPALAAGNWVVGDRHDLSSQAYQGGGRGFDRELMATMKRTVLGDFTPDLTIYMDIDPKLGLQRASARGELDRIEQMKLDFFERSRERYLEFANNDESIITIDAGQDLDTVTASIIAALEIWLATNGN.

An ATP-binding site is contributed by 9–16 (GLEGAGKS).

Belongs to the thymidylate kinase family.

The enzyme catalyses dTMP + ATP = dTDP + ADP. Its function is as follows. Phosphorylation of dTMP to form dTDP in both de novo and salvage pathways of dTTP synthesis. The sequence is that of Thymidylate kinase from Aliivibrio salmonicida (strain LFI1238) (Vibrio salmonicida (strain LFI1238)).